Reading from the N-terminus, the 429-residue chain is MSLNNARPLLGCIADDFTGATDLANMLVRGGMRTVQSIGIPSAEMAAGLDADAIVIALKSRTTPSADAVAESLAALEWLRERGCEQIFFKYCSTFDSTAAGNIGQVSEALLEQLDSDFTLACPAFPENGRTIFRGHLFVQDQLLSESGMQNHPLTPMTDANLVRVLQAQTRHKVGLLRYDSIAQGVEGVRNRIAELRAEGVSMAIADALSDADLYTLGEACADLPLLTGGSGLALGLPGNFRKAGKLRDIDAAKQVAISGGEVVLAGSASVATNGQVAAWLEDNRPALRINPLDLAAGKPVVEQALTFARDAGQTVLIYATSTPDEVKAVQKELGVERSGAMVEAALGEIAKGLLNAGVRRFVVAGGETSGAVVQALGVQLLQIGAQIDPGVPATVSSGAQPLALALKSGNFGARDFFAKALKQLAGAA.

ATP contacts are provided by residues serine 268, 366-369 (GGET), and glycine 410.

This sequence belongs to the four-carbon acid sugar kinase family.

It carries out the reaction 3-dehydro-L-erythronate + ATP = 3-dehydro-4-O-phospho-L-erythronate + ADP + H(+). The enzyme catalyses 3-dehydro-D-erythronate + ATP = 3-dehydro-4-O-phospho-D-erythronate + ADP + H(+). Functionally, catalyzes the ATP-dependent phosphorylation of 3-oxo-tetronate to 3-oxo-tetronate 4-phosphate. This Pseudomonas savastanoi pv. phaseolicola (strain 1448A / Race 6) (Pseudomonas syringae pv. phaseolicola (strain 1448A / Race 6)) protein is 3-oxo-tetronate kinase.